The chain runs to 480 residues: Glutamate--tRNA ligase (480 aa).

The short motif at 12–22 is the 'HIGH' region element; sequence PSPTGAPHLGL. The short motif at 255 to 259 is the 'KMSKS' region element; it reads KLSKR. Lysine 258 is an ATP binding site.

This sequence belongs to the class-I aminoacyl-tRNA synthetase family. Glutamate--tRNA ligase type 1 subfamily. In terms of assembly, monomer.

It localises to the cytoplasm. The enzyme catalyses tRNA(Glu) + L-glutamate + ATP = L-glutamyl-tRNA(Glu) + AMP + diphosphate. Its function is as follows. Catalyzes the attachment of glutamate to tRNA(Glu) in a two-step reaction: glutamate is first activated by ATP to form Glu-AMP and then transferred to the acceptor end of tRNA(Glu). This chain is Glutamate--tRNA ligase, found in Tropheryma whipplei (strain TW08/27) (Whipple's bacillus).